A 160-amino-acid polypeptide reads, in one-letter code: Secreted RxLR effector protein RXLR-C11 (160 aa).

Positions 1–19 (MHFSLVLLVFAAIVIPICA) are cleaved as a signal peptide. The RxLR-dEER signature appears at 58–75 (RLLRMNDKAVISDHEEER).

This sequence belongs to the RxLR effector family.

The protein localises to the secreted. The protein resides in the host cell membrane. It is found in the host nucleus. Secreted effector that suppresses pattern-triggered immunity (PTI) in plant host. This chain is Secreted RxLR effector protein RXLR-C11, found in Plasmopara halstedii (Downy mildew of sunflower).